A 180-amino-acid polypeptide reads, in one-letter code: Regulator of G-protein signaling 8 (180 aa).

Position 26 is a phosphoserine (S26). An RGS domain is found at 56-171 (SFDVLLSHKY…FLRSKMYLDL (116 aa)).

Interacts with GNAO1 and GNAI3. In terms of tissue distribution, expressed at high levels in brain. Very little expression detected in other tissues. Detected in Purkinje cells in the cerebellum.

Its subcellular location is the cell membrane. It localises to the membrane. It is found in the perikaryon. The protein localises to the cell projection. The protein resides in the dendrite. Its subcellular location is the nucleus. Its function is as follows. Regulates G protein-coupled receptor signaling cascades, including signaling via muscarinic acetylcholine receptor CHRM2 and dopamine receptor DRD2. Inhibits signal transduction by increasing the GTPase activity of G protein alpha subunits, thereby driving them into their inactive GDP-bound form. Modulates the activity of potassium channels that are activated in response to DRD2 and CHRM2 signaling. The sequence is that of Regulator of G-protein signaling 8 (Rgs8) from Rattus norvegicus (Rat).